We begin with the raw amino-acid sequence, 328 residues long: UPF0252 protein PF0978 (328 aa).

The helical transmembrane segment at 3-23 (VPLLILLFLVLTSGCIAPSTP) threads the bilayer.

Belongs to the UPF0252 family.

It localises to the membrane. This chain is UPF0252 protein PF0978, found in Pyrococcus furiosus (strain ATCC 43587 / DSM 3638 / JCM 8422 / Vc1).